Here is a 385-residue protein sequence, read N- to C-terminus: Endoglucanase 1 (385 aa).

Residues 1-17 (MKLVFSALASLLSGASA) form the signal peptide. Residues Asn-93 and Asn-140 are each glycosylated (N-linked (GlcNAc...) asparagine). The Proton donor role is filled by Glu-176. Asn-200 and Asn-237 each carry an N-linked (GlcNAc...) asparagine glycan. The Nucleophile role is filled by Glu-284. Asn-289 and Asn-331 each carry an N-linked (GlcNAc...) asparagine glycan.

Belongs to the glycosyl hydrolase 5 (cellulase A) family.

The enzyme catalyses Endohydrolysis of (1-&gt;4)-beta-D-glucosidic linkages in cellulose, lichenin and cereal beta-D-glucans.. Its pathway is glycan metabolism; cellulose degradation. Functionally, active towards carboxymethyl cellulose. This chain is Endoglucanase 1 (eg 1), found in Robillarda sp. (strain Y-20).